Consider the following 717-residue polypeptide: CRISPR-associated protein Cas8b (717 aa).

2 disordered regions span residues 263–283 and 698–717; these read IGVF…DQSW and HEKE…STTN. Residues 701–717 show a composition bias toward acidic residues; the sequence is EDEDDQDTEEPAESTTN.

The protein localises to the cytoplasm. CRISPR (clustered regularly interspaced short palindromic repeat) is an adaptive immune system that provides protection against mobile genetic elements (viruses, transposable elements and conjugative plasmids). CRISPR clusters contain sequences complementary to antecedent mobile elements and target invading nucleic acids. CRISPR clusters are transcribed and processed into CRISPR RNA (crRNA). Plasmid targeted by CRISPR locus P1 transform wild-type cells very poorly. This subunit might be involved in stabilizing crRNA. This is CRISPR-associated protein Cas8b from Haloferax volcanii (strain ATCC 29605 / DSM 3757 / JCM 8879 / NBRC 14742 / NCIMB 2012 / VKM B-1768 / DS2) (Halobacterium volcanii).